The sequence spans 674 residues: Probable 3',5'-cyclic-AMP phosphodiesterase pde-4 (674 aa).

The disordered stretch occupies residues methionine 1–proline 82. Residues glycine 15–glycine 24 are compositionally biased toward gly residues. Residues arginine 39 to alanine 62 are compositionally biased toward low complexity. The segment covering proline 66 to serine 78 has biased composition (polar residues). Residues histidine 328–glutamate 660 enclose the PDEase domain. Catalysis depends on histidine 407, which acts as the Proton donor. 4 residues coordinate a divalent metal cation: histidine 411, histidine 447, aspartate 448, and aspartate 565.

The protein belongs to the cyclic nucleotide phosphodiesterase family. Requires a divalent metal cation as cofactor. Expressed in dorsal D (DD) motor neurons and several other neurons at the L1 stage. Expression in DD neurons decreases gradually beginning in the late L1 stage. Highly expressed in adult ventral D (VD) motor neurons, but diminished in adult DD motor neurons.

The enzyme catalyses 3',5'-cyclic AMP + H2O = AMP + H(+). Functionally, hydrolyzes the second messenger 3',5'-cyclic AMP (cAMP), which is a key regulator of many important physiological processes. Antagonizes dorsal D (DD) motor neuron respecification by reducing levels of cAMP. This chain is Probable 3',5'-cyclic-AMP phosphodiesterase pde-4 (pde-4), found in Caenorhabditis elegans.